The chain runs to 188 residues: MTETREPAETGGYASLEEDDEDLSPGPEHSSDSEYTLSEPDSEEEEDEEEEEEETTDDPEYDPGYKVKQRLGGGRGGPSRRAPRAAQPPAQPCQLCGRSPLGEAPPGTPPCRLCCPATAPQEAPAPEGRALGEEEEEPPRAGEGRPAGREEEEEEEEEGTYHCTECEDSFDNLGELHGHFMLHARGEV.

A disordered region spans residues 1 to 162; it reads MTETREPAET…EEEEEEGTYH (162 aa). Positions 40–61 are enriched in acidic residues; it reads PDSEEEEDEEEEEEETTDDPEY. Over residues 84 to 94 the composition is skewed to low complexity; sequence RAAQPPAQPCQ. T108 is subject to Phosphothreonine. The span at 116–129 shows a compositional bias: low complexity; the sequence is PATAPQEAPAPEGR. A compositionally biased stretch (basic and acidic residues) spans 138–149; that stretch reads PPRAGEGRPAGR. The C2H2-type zinc finger occupies 161–183; that stretch reads YHCTECEDSFDNLGELHGHFMLH.

This Homo sapiens (Human) protein is Zinc finger protein 428 (ZNF428).